Here is a 104-residue protein sequence, read N- to C-terminus: Large ribosomal subunit protein bL21c (104 aa).

It belongs to the bacterial ribosomal protein bL21 family. Part of the 50S ribosomal subunit.

The protein resides in the plastid. Its subcellular location is the chloroplast. Its function is as follows. This protein binds to 23S rRNA. This chain is Large ribosomal subunit protein bL21c, found in Pyropia yezoensis (Susabi-nori).